The following is a 153-amino-acid chain: ATP synthase subunit b' (153 aa).

The chain crosses the membrane as a helical span at residues 20–40 (TLPLMAVQVVLLTFILNALFF).

This sequence belongs to the ATPase B chain family. As to quaternary structure, F-type ATPases have 2 components, F(1) - the catalytic core - and F(0) - the membrane proton channel. F(1) has five subunits: alpha(3), beta(3), gamma(1), delta(1), epsilon(1). F(0) has four main subunits: a(1), b(1), b'(1) and c(10-14). The alpha and beta chains form an alternating ring which encloses part of the gamma chain. F(1) is attached to F(0) by a central stalk formed by the gamma and epsilon chains, while a peripheral stalk is formed by the delta, b and b' chains.

It is found in the cellular thylakoid membrane. F(1)F(0) ATP synthase produces ATP from ADP in the presence of a proton or sodium gradient. F-type ATPases consist of two structural domains, F(1) containing the extramembraneous catalytic core and F(0) containing the membrane proton channel, linked together by a central stalk and a peripheral stalk. During catalysis, ATP synthesis in the catalytic domain of F(1) is coupled via a rotary mechanism of the central stalk subunits to proton translocation. Functionally, component of the F(0) channel, it forms part of the peripheral stalk, linking F(1) to F(0). The b'-subunit is a diverged and duplicated form of b found in plants and photosynthetic bacteria. The polypeptide is ATP synthase subunit b' (Prochlorococcus marinus (strain NATL1A)).